Reading from the N-terminus, the 426-residue chain is Chordin-like protein 2 (426 aa).

An N-terminal signal peptide occupies residues 1-25; it reads MVPGVRIIPSLLGLVMFWLPLDSQA. VWFC domains follow at residues 31–96 and 109–175; these read KVCL…PRCV and KSCQ…QTCK. A glycan (N-linked (GlcNAc...) asparagine) is linked at N114. S182 is modified (phosphoserine). Over residues 182–191 the composition is skewed to polar residues; the sequence is STEENLTQLQ. The interval 182–216 is disordered; that stretch reads STEENLTQLQHGERHSQDPCSERRGPSTPAPTSLS. N186 carries an N-linked (GlcNAc...) asparagine glycan. Residues 192–206 show a composition bias toward basic and acidic residues; that stretch reads HGERHSQDPCSERRG. Residues 207–216 show a composition bias toward low complexity; that stretch reads PSTPAPTSLS. The VWFC 3 domain occupies 246 to 311; sequence KACTHNGKTY…VAGKCCKICP (66 aa).

In terms of assembly, interacts with GDF5. May interact with INHBA, BMP2, BMP4, BMP5, BMP6, and BMP7. As to expression, weakly expressed in the liver and kidney. In reproductive organs expressed in connective tissues such as ligaments of the ovary and oviduct in females, and of testis, epididymis and certain male accessory sex glands in males. Expression was high in uterine myometrium. Weakly expressed in cartilage of the femoral head, patella, articular facets of vertebrae, in the annulus fibrosus of intervertebral disks. In normal cartilage, expression was confined to articular chondrocytes especially in the superficial zone.

The protein resides in the secreted. In terms of biological role, implicated in tumor angiogenesis. May inhibits BMPs activity by blocking their interaction with their receptors. Has a negative regulator effect on the cartilage formation/regeneration from immature mesenchymal cells, by preventing or reducing the rate of matrix accumulation. May play a role during myoblast and osteoblast differentiation, and maturation. The protein is Chordin-like protein 2 (Chrdl2) of Mus musculus (Mouse).